The primary structure comprises 202 residues: Adenylyl-sulfate kinase (202 aa).

31–38 (GLSASGKS) serves as a coordination point for ATP. S105 (phosphoserine intermediate) is an active-site residue.

It belongs to the APS kinase family.

It catalyses the reaction adenosine 5'-phosphosulfate + ATP = 3'-phosphoadenylyl sulfate + ADP + H(+). It participates in sulfur metabolism; hydrogen sulfide biosynthesis; sulfite from sulfate: step 2/3. Its function is as follows. Catalyzes the synthesis of activated sulfate. The sequence is that of Adenylyl-sulfate kinase (MET14) from Saccharomyces cerevisiae (strain ATCC 204508 / S288c) (Baker's yeast).